Here is a 304-residue protein sequence, read N- to C-terminus: Putative S-adenosyl-L-methionine-dependent methyltransferase MAP_4189c (304 aa).

Residues Asp130 and 159–160 (DL) contribute to the S-adenosyl-L-methionine site.

This sequence belongs to the UPF0677 family.

In terms of biological role, exhibits S-adenosyl-L-methionine-dependent methyltransferase activity. The chain is Putative S-adenosyl-L-methionine-dependent methyltransferase MAP_4189c from Mycolicibacterium paratuberculosis (strain ATCC BAA-968 / K-10) (Mycobacterium paratuberculosis).